A 1218-amino-acid polypeptide reads, in one-letter code: ABC transporter NFT1 (1218 aa).

At Met1 to Pro29 the chain is on the extracellular side. N-linked (GlcNAc...) asparagine glycosylation is present at Asn4. A helical transmembrane segment spans residues Leu30–Leu50. The Cytoplasmic segment spans residues Arg51–Lys103. Residues Phe104–Met124 form a helical membrane-spanning segment. Residues Pro125–Lys130 are Extracellular-facing. Residues Phe131 to Thr151 form a helical membrane-spanning segment. Over Leu152–Arg169 the chain is Cytoplasmic. Residues Asp170 to Leu190 form a helical membrane-spanning segment. Topologically, residues Arg191–Lys201 are extracellular. Residues Ile202–Ser222 form a helical membrane-spanning segment. Over Thr223–Asn302 the chain is Cytoplasmic. The chain crosses the membrane as a helical span at residues Ile303–Phe323. The region spanning Phe311–Gln621 is the ABC transmembrane type-1 1 domain. Over Leu324–Ser351 the chain is Extracellular. A helical transmembrane segment spans residues Leu352 to Leu374. Topologically, residues Gly375–Ser449 are cytoplasmic. Residues Asn410–Asp434 form a disordered region. Positions Ala424 to Asp434 are enriched in basic and acidic residues. Residues Glu450 to Met470 form a helical membrane-spanning segment. The Extracellular portion of the chain corresponds to Ile471–Phe481. The helical transmembrane segment at Ala482 to Tyr504 threads the bilayer. Over Gln505–Thr558 the chain is Cytoplasmic. The helical transmembrane segment at Ile559–Phe579 threads the bilayer. Residues Ser580–Lys584 lie on the Extracellular side of the membrane. Residues Phe585–Leu605 traverse the membrane as a helical segment. Topologically, residues Arg606 to Asp953 are cytoplasmic. The 242-residue stretch at Phe651–Asn892 folds into the ABC transporter domain. Gly686 to Ser693 is an ATP binding site. Over residues Asn892–Gln901 the composition is skewed to polar residues. The tract at residues Asn892–Glu926 is disordered. The helical transmembrane segment at Tyr954–Ile974 threads the bilayer. Positions Val961 to Ser1218 constitute an ABC transmembrane type-1 2 domain. The Extracellular portion of the chain corresponds to Thr975 to Thr1013. The helical transmembrane segment at Tyr1014–Ile1034 threads the bilayer. At Ser1035–Leu1082 the chain is on the cytoplasmic side. The helical transmembrane segment at Ile1083–Tyr1105 threads the bilayer. The Extracellular segment spans residues Val1106 to Gln1109. The chain crosses the membrane as a helical span at residues Phe1110–Ser1132. Topologically, residues Arg1133 to Arg1197 are cytoplasmic. Residues Val1198–Ser1218 form a helical membrane-spanning segment.

Belongs to the ABC transporter superfamily. ABCC family. Conjugate transporter (TC 3.A.1.208) subfamily.

It is found in the membrane. This is ABC transporter NFT1 (NFT1) from Saccharomyces cerevisiae (strain ATCC 204508 / S288c) (Baker's yeast).